Consider the following 165-residue polypeptide: Ribosome maturation factor RimM (165 aa).

The region spanning 92–163 is the PRC barrel domain; sequence EARHYWADLE…RVVVDPPEGL (72 aa).

The protein belongs to the RimM family. In terms of assembly, binds ribosomal protein uS19.

It is found in the cytoplasm. An accessory protein needed during the final step in the assembly of 30S ribosomal subunit, possibly for assembly of the head region. Essential for efficient processing of 16S rRNA. May be needed both before and after RbfA during the maturation of 16S rRNA. It has affinity for free ribosomal 30S subunits but not for 70S ribosomes. The polypeptide is Ribosome maturation factor RimM (Anaeromyxobacter sp. (strain Fw109-5)).